A 347-amino-acid chain; its full sequence is DNA-directed RNA polymerase subunit alpha (347 aa).

An alpha N-terminal domain (alpha-NTD) region spans residues 1-226 (MLISQRPTLS…ELFGLARELN (226 aa)). The interval 241–347 (ADHIASFALP…DQDYAETEQL (107 aa)) is alpha C-terminal domain (alpha-CTD).

This sequence belongs to the RNA polymerase alpha chain family. As to quaternary structure, homodimer. The RNAP catalytic core consists of 2 alpha, 1 beta, 1 beta' and 1 omega subunit. When a sigma factor is associated with the core the holoenzyme is formed, which can initiate transcription.

It catalyses the reaction RNA(n) + a ribonucleoside 5'-triphosphate = RNA(n+1) + diphosphate. Its function is as follows. DNA-dependent RNA polymerase catalyzes the transcription of DNA into RNA using the four ribonucleoside triphosphates as substrates. This chain is DNA-directed RNA polymerase subunit alpha, found in Mycobacterium avium (strain 104).